The primary structure comprises 173 residues: Flagellar biosynthetic protein FliV (173 aa).

It belongs to the FliB family.

Its function is as follows. Required for the secretion of flagellin and expression of motility. This is Flagellar biosynthetic protein FliV (fliV) from Salmonella muenchen.